The sequence spans 139 residues: Protein Turandot B (139 aa).

An N-terminal signal peptide occupies residues 1–21 (MNFKTALICFALLLIGTLCSA).

Belongs to the Turandot family.

The protein resides in the secreted. Functionally, a humoral factor that may play a role in stress tolerance. The protein is Protein Turandot B of Drosophila sechellia (Fruit fly).